A 346-amino-acid polypeptide reads, in one-letter code: Aspartate-semialdehyde dehydrogenase (346 aa).

Residues 12-15 (SGAV) and 40-41 (RS) each bind NADP(+). Residue Arg101 participates in phosphate binding. Cys131 (acyl-thioester intermediate) is an active-site residue. Substrate is bound at residue Gln158. Position 161–162 (161–162 (SG)) interacts with NADP(+). Position 225 (Lys225) interacts with phosphate. Arg246 is a substrate binding site. The active-site Proton acceptor is the His253. Gln326 contributes to the NADP(+) binding site.

The protein belongs to the aspartate-semialdehyde dehydrogenase family. Homodimer.

It carries out the reaction L-aspartate 4-semialdehyde + phosphate + NADP(+) = 4-phospho-L-aspartate + NADPH + H(+). The protein operates within amino-acid biosynthesis; L-lysine biosynthesis via DAP pathway; (S)-tetrahydrodipicolinate from L-aspartate: step 2/4. Its pathway is amino-acid biosynthesis; L-methionine biosynthesis via de novo pathway; L-homoserine from L-aspartate: step 2/3. It participates in amino-acid biosynthesis; L-threonine biosynthesis; L-threonine from L-aspartate: step 2/5. In terms of biological role, catalyzes the NADPH-dependent formation of L-aspartate-semialdehyde (L-ASA) by the reductive dephosphorylation of L-aspartyl-4-phosphate. This Helicobacter pylori (strain ATCC 700392 / 26695) (Campylobacter pylori) protein is Aspartate-semialdehyde dehydrogenase.